The following is a 692-amino-acid chain: Elongation factor G (692 aa).

A tr-type G domain is found at 8–282 (EKTRNIGIMA…AVVEYMPAPT (275 aa)). GTP contacts are provided by residues 17 to 24 (AHIDAGKT), 81 to 85 (DTPGH), and 135 to 138 (NKMD). Residues 285 to 304 (PNIKGVHPETGEADERHSSD) are disordered. A compositionally biased stretch (basic and acidic residues) spans 290 to 304 (VHPETGEADERHSSD).

This sequence belongs to the TRAFAC class translation factor GTPase superfamily. Classic translation factor GTPase family. EF-G/EF-2 subfamily.

Its subcellular location is the cytoplasm. In terms of biological role, catalyzes the GTP-dependent ribosomal translocation step during translation elongation. During this step, the ribosome changes from the pre-translocational (PRE) to the post-translocational (POST) state as the newly formed A-site-bound peptidyl-tRNA and P-site-bound deacylated tRNA move to the P and E sites, respectively. Catalyzes the coordinated movement of the two tRNA molecules, the mRNA and conformational changes in the ribosome. In Desulfitobacterium hafniense (strain Y51), this protein is Elongation factor G.